The primary structure comprises 65 residues: Large ribosomal subunit protein bL28 (65 aa).

Belongs to the bacterial ribosomal protein bL28 family.

The polypeptide is Large ribosomal subunit protein bL28 (Bifidobacterium animalis subsp. lactis (strain AD011)).